A 39-amino-acid polypeptide reads, in one-letter code: Photosystem II reaction center protein J (39 aa).

Residues 9–29 (LWLVATVGGIAVITVLGIFIY) traverse the membrane as a helical segment.

It belongs to the PsbJ family. PSII is composed of 1 copy each of membrane proteins PsbA, PsbB, PsbC, PsbD, PsbE, PsbF, PsbH, PsbI, PsbJ, PsbK, PsbL, PsbM, PsbT, PsbX, PsbY, PsbZ, Psb30/Ycf12, at least 3 peripheral proteins of the oxygen-evolving complex and a large number of cofactors. It forms dimeric complexes.

The protein localises to the plastid. The protein resides in the chloroplast thylakoid membrane. One of the components of the core complex of photosystem II (PSII). PSII is a light-driven water:plastoquinone oxidoreductase that uses light energy to abstract electrons from H(2)O, generating O(2) and a proton gradient subsequently used for ATP formation. It consists of a core antenna complex that captures photons, and an electron transfer chain that converts photonic excitation into a charge separation. The polypeptide is Photosystem II reaction center protein J (Gracilaria tenuistipitata var. liui (Red alga)).